A 2355-amino-acid polypeptide reads, in one-letter code: Acetyl-CoA carboxylase 2 (2355 aa).

Positions 138 to 645 constitute a Biotin carboxylation domain; sequence PIHSILVATN…HTGWLDSRIA (508 aa). The ATP-grasp domain maps to 291–485; sequence GRSLVTVPEE…AAQVAVGMGI (195 aa). 317–374 contacts ATP; that stretch reads CQVVGYPAMIKASWGGGGKGIRKVHNDDEVRALFKQVQGEVPGSPIFIMKVASQSRHL. 3 residues coordinate Mg(2+): E440, E454, and N456. The Mn(2+) site is built by E440, E454, and N456. The active site involves R458. Residues 772 to 846 form the Biotinyl-binding domain; that stretch reads LQNDHDPSKL…QAGELIAKLD (75 aa). K813 is modified (N6-biotinyllysine). T1133 is modified (phosphothreonine). Position 1293 is a phosphoserine (S1293). In terms of domain architecture, CoA carboxyltransferase N-terminal spans 1593–1932; sequence QYKPLNNLDR…YVGGPLPVLA (340 aa). Residues 1593–2251 are carboxyltransferase; it reads QYKPLNNLDR…ESSLVRNIRK (659 aa). The CoA site is built by R1841, K2142, and R2144. Residues 1936–2251 form the CoA carboxyltransferase C-terminal domain; that stretch reads PPERTVEYIP…ESSLVRNIRK (316 aa).

Homodimer. It depends on biotin as a cofactor. Mg(2+) is required as a cofactor. Mn(2+) serves as cofactor. Widely expressed at low levels.

It is found in the cytoplasm. It localises to the cytosol. The catalysed reaction is hydrogencarbonate + acetyl-CoA + ATP = malonyl-CoA + ADP + phosphate + H(+). It catalyses the reaction N(6)-biotinyl-L-lysyl-[protein] + hydrogencarbonate + ATP = N(6)-carboxybiotinyl-L-lysyl-[protein] + ADP + phosphate + H(+). Its pathway is lipid metabolism; malonyl-CoA biosynthesis; malonyl-CoA from acetyl-CoA: step 1/1. Its function is as follows. Multifunctional enzyme that catalyzes the carboxylation of acetyl-CoA, forming malonyl-CoA, which is used in the plastid for fatty acid synthesis and in the cytosol in various biosynthetic pathways including fatty acid elongation. This Arabidopsis thaliana (Mouse-ear cress) protein is Acetyl-CoA carboxylase 2 (ACC2).